An 846-amino-acid chain; its full sequence is MSESGFSQRFNPHVVDGRWQKKWEESGCFHAKDNSDRPHSYILEMFPYPSGRIHMGHVRNYTMGDVLARYYRMKGHEVLHPMGWDAFGMPAENAAMERKIHPREWTMSNIATMREQLKRIGFAIDWSRELATCEPSYYGQEQALFLDLYKAGLVYRKESAVNWDPIDNTVLANEQVIDGRGWRSGALVERKKLNQWFLKITEFADDLLDGLKDLDQWPEKVRSMQENWIGRSQGMQFHFNFEVAPEGFDKIEVFTTRPDTLFGASFVAIACDHPIAKALAEKNAALPEFIADCQKMGTAAEDIETAEKKGFDTGLSLVHPLNPELKLPLFVANFVLMDYGTGAVFGCPAHDQRDLDFALKYNLPVKRVVAPSEAESNEAIGDKADTRAGIMVNSSFLDGLSSEEAKKTVIARAEKEGWGKGTTVFRLRDWGVSRQRYWGTPIPIIHCDSCGAVPVPKDQLPVTLPDDINFDKPGNPLERHPTWKNVTCPKCGKPARRETDTLDTFVDSSWYFIRFASQPDDKPFDKATAEKWLPVGQYIGGVEHAILHLLYARFWTRALQSIGRLDIKEPFTGLFTQGMVTHETYKDPEGHWLSPEQIHKDEAGIFLTESGEKVTVGRVEKMSKSKKNVVEPAPILDQYGADAVRWFMLSDSPPERDLAWTEAGIEGCWRFMQRLWRVAAIASEEASAGIDKDLQHRLHCSIKEVGEAIEGLSFNKAIAKIHDLVNAIEKAKASATRKEAALTLFRLVAPMVPHLSEEAWHLLEKEGFVAEASWPEFDPALTVEDEITIAVQVNGKLRDTLTVARDMPKDEAEKLALASEKVIKMLEGRSPKKVIVVPNRLVNIVA.

The 'HIGH' region signature appears at 47–57 (PYPSGRIHMGH). The 'KMSKS' region motif lies at 621–625 (KMSKS). Position 624 (lysine 624) interacts with ATP.

It belongs to the class-I aminoacyl-tRNA synthetase family.

Its subcellular location is the cytoplasm. The catalysed reaction is tRNA(Leu) + L-leucine + ATP = L-leucyl-tRNA(Leu) + AMP + diphosphate. This Zymomonas mobilis subsp. mobilis (strain ATCC 31821 / ZM4 / CP4) protein is Leucine--tRNA ligase.